A 256-amino-acid polypeptide reads, in one-letter code: Thiazole synthase (256 aa).

K95 acts as the Schiff-base intermediate with DXP in catalysis. Residues G156, 182-183 (AG), and 204-205 (NT) contribute to the 1-deoxy-D-xylulose 5-phosphate site.

This sequence belongs to the ThiG family. As to quaternary structure, homotetramer. Forms heterodimers with either ThiH or ThiS.

The protein localises to the cytoplasm. The catalysed reaction is [ThiS sulfur-carrier protein]-C-terminal-Gly-aminoethanethioate + 2-iminoacetate + 1-deoxy-D-xylulose 5-phosphate = [ThiS sulfur-carrier protein]-C-terminal Gly-Gly + 2-[(2R,5Z)-2-carboxy-4-methylthiazol-5(2H)-ylidene]ethyl phosphate + 2 H2O + H(+). The protein operates within cofactor biosynthesis; thiamine diphosphate biosynthesis. Its function is as follows. Catalyzes the rearrangement of 1-deoxy-D-xylulose 5-phosphate (DXP) to produce the thiazole phosphate moiety of thiamine. Sulfur is provided by the thiocarboxylate moiety of the carrier protein ThiS. In vitro, sulfur can be provided by H(2)S. In Escherichia coli O7:K1 (strain IAI39 / ExPEC), this protein is Thiazole synthase.